The following is a 156-amino-acid chain: Endoribonuclease YbeY (156 aa).

3 residues coordinate Zn(2+): His-122, His-126, and His-132.

This sequence belongs to the endoribonuclease YbeY family. Requires Zn(2+) as cofactor.

It localises to the cytoplasm. Single strand-specific metallo-endoribonuclease involved in late-stage 70S ribosome quality control and in maturation of the 3' terminus of the 16S rRNA. The chain is Endoribonuclease YbeY from Bacillus cereus (strain ATCC 14579 / DSM 31 / CCUG 7414 / JCM 2152 / NBRC 15305 / NCIMB 9373 / NCTC 2599 / NRRL B-3711).